A 265-amino-acid polypeptide reads, in one-letter code: Probable esterase tazC (265 aa).

Residues Ser-119, Asp-209, and His-236 each act as charge relay system in the active site.

This sequence belongs to the LovG family.

Its pathway is secondary metabolite biosynthesis. Its function is as follows. Probable esterase; part of the gene cluster that mediates the biosynthesis of azaterrilone A and other azaphilones, a class of fungal metabolites characterized by a highly oxygenated pyrano-quinone bicyclic core and exhibiting a broad range of bioactivities. The first step of the pathway begins with the non-reducing polyketide synthase tazA that assembles one acetyl-CoA starter unit, five malonyl-CoA units, and catalyzes a series of Claisen condensations, methylation, PT-mediated cyclization, and finally releases the first hexaketide precursor through the R-domain. The tazA product then undergoes reduction on its terminal ketone and the following pyran-ring formation by yet undetermined enzyme(s). Dehydration and enoyl reduction, possibly involving the trans-enoyl reductase tazE leads to the next intermediate. TazD is predicted as an acetyltransferase and might catalyze the acetylation steps leading to the synthesis of azaterrilone A. Azaterrilone A is not the final product of the taz pathway and both the highly reducing polyketide synthase tazB and the dual enzyme tazHJ catalyze late steps of the pathway, leading to the production of the 2 final stereoisomers that contain additional polyketide modification whose structures have still to be determined. The sequence is that of Probable esterase tazC from Aspergillus terreus (strain NIH 2624 / FGSC A1156).